The sequence spans 498 residues: MMRLRTLLQPWLDLTDADDRPVGGLAVDSRDIEPGFVFVALRGSRHHGLGYLGDALAAGAGAVLWEPAGDVAPEPDERTAAERAGVPLIAVPDLGRRLGPIAARLYGDPSARMRVVGVTGTDGKTSVTQYLAQLLDREAHRCGLVGTLGSGFPDSLQPGTHTTPDAASVQRTLARLHRQGAAQVAMEVSSHALDQHRVAGVRFHTAVLTNLGRDHLDYHGDLAGYAEAKSRLFGVPGLQWAVLNLDDAFGRQVHGALAGGTRALGYSLAGHPQAGVRGEGLVLEPQGLRLRLSTEWGEAPVQAPLLGAFNAANVLAVAAAALSLGVALPVIVERLAGLRPVPGRMEPFTRPGRPSVIVDYAHTPAALRGALAAVRAHYRGAVWLVFGCGGDRDRGKRPLMGEAAAELADRVVLTDDNPRREDPDRIIDDIRQGAPGRDWPVLRDRAGAIRHAVERAGPEDVVLVAGKGHETVQQIGDRCLPFSDREAVVQALGEEEGA.

Serine 29 provides a ligand contact to UDP-N-acetyl-alpha-D-muramoyl-L-alanyl-D-glutamate. Residue 120-126 (GTDGKTS) participates in ATP binding. UDP-N-acetyl-alpha-D-muramoyl-L-alanyl-D-glutamate is bound by residues 162-163 (TT), serine 189, glutamine 195, and arginine 197. Lysine 229 is modified (N6-carboxylysine). Meso-2,6-diaminopimelate-binding positions include arginine 392, 416–419 (DNPR), glycine 466, and glutamate 470. The short motif at 416–419 (DNPR) is the Meso-diaminopimelate recognition motif element.

The protein belongs to the MurCDEF family. MurE subfamily. Mg(2+) serves as cofactor. Post-translationally, carboxylation is probably crucial for Mg(2+) binding and, consequently, for the gamma-phosphate positioning of ATP.

The protein resides in the cytoplasm. It carries out the reaction UDP-N-acetyl-alpha-D-muramoyl-L-alanyl-D-glutamate + meso-2,6-diaminopimelate + ATP = UDP-N-acetyl-alpha-D-muramoyl-L-alanyl-gamma-D-glutamyl-meso-2,6-diaminopimelate + ADP + phosphate + H(+). It functions in the pathway cell wall biogenesis; peptidoglycan biosynthesis. Its function is as follows. Catalyzes the addition of meso-diaminopimelic acid to the nucleotide precursor UDP-N-acetylmuramoyl-L-alanyl-D-glutamate (UMAG) in the biosynthesis of bacterial cell-wall peptidoglycan. The sequence is that of UDP-N-acetylmuramoyl-L-alanyl-D-glutamate--2,6-diaminopimelate ligase from Alkalilimnicola ehrlichii (strain ATCC BAA-1101 / DSM 17681 / MLHE-1).